The chain runs to 243 residues: Benzil reductase ((S)-benzoin forming) (243 aa).

NADP(+) is bound by residues Ile-6, Asn-80, Tyr-147, Lys-151, and Thr-184. Tyr-147 functions as the Proton acceptor in the catalytic mechanism.

This sequence belongs to the short-chain dehydrogenases/reductases (SDR) family.

The protein resides in the cytoplasm. It carries out the reaction (S)-benzoin + NADP(+) = benzil + NADPH + H(+). Its function is as follows. Reduces benzil stereospecifically to (S)-benzoin. The chain is Benzil reductase ((S)-benzoin forming) (yueD) from Bacillus subtilis (strain 168).